The primary structure comprises 807 residues: Glycerol-3-phosphate acyltransferase (807 aa).

Positions 308–313 (CHRSHM) match the HXXXXD motif motif.

This sequence belongs to the GPAT/DAPAT family.

It localises to the cell inner membrane. It carries out the reaction sn-glycerol 3-phosphate + an acyl-CoA = a 1-acyl-sn-glycero-3-phosphate + CoA. The protein operates within phospholipid metabolism; CDP-diacylglycerol biosynthesis; CDP-diacylglycerol from sn-glycerol 3-phosphate: step 1/3. In Shewanella baltica (strain OS223), this protein is Glycerol-3-phosphate acyltransferase.